Reading from the N-terminus, the 130-residue chain is Small ribosomal subunit protein uS9 (130 aa).

This sequence belongs to the universal ribosomal protein uS9 family.

This Desulfovibrio desulfuricans (strain ATCC 27774 / DSM 6949 / MB) protein is Small ribosomal subunit protein uS9.